A 133-amino-acid chain; its full sequence is MPPKPRIALIAHDHKKDDIVAFAARHRAFLSQCELLATGTTGGRLIDEVGLDVTRMLSGPWGGDLQIGAQLAEGRVSAVVFLRDPMTPQPHEPDINALVRACDVHNVPCATNVASAELLLAGLARENGAAQAG.

Positions 1-133 (MPPKPRIALI…ARENGAAQAG (133 aa)) constitute an MGS-like domain. Residues His12, Lys16, 38–41 (TGTT), and 58–59 (SG) contribute to the substrate site. Asp64 acts as the Proton donor/acceptor in catalysis. Residue His91 coordinates substrate.

The protein belongs to the methylglyoxal synthase family.

It catalyses the reaction dihydroxyacetone phosphate = methylglyoxal + phosphate. Its function is as follows. Catalyzes the formation of methylglyoxal from dihydroxyacetone phosphate. This chain is Methylglyoxal synthase, found in Cupriavidus taiwanensis (strain DSM 17343 / BCRC 17206 / CCUG 44338 / CIP 107171 / LMG 19424 / R1) (Ralstonia taiwanensis (strain LMG 19424)).